Reading from the N-terminus, the 308-residue chain is Lipoyl synthase (308 aa).

[4Fe-4S] cluster is bound by residues C51, C56, C62, C77, C81, C84, and S290. Residues 63 to 279 (WSKRHATFMI…ETIAKSKGFL (217 aa)) enclose the Radical SAM core domain.

The protein belongs to the radical SAM superfamily. Lipoyl synthase family. [4Fe-4S] cluster serves as cofactor.

The protein resides in the cytoplasm. The catalysed reaction is [[Fe-S] cluster scaffold protein carrying a second [4Fe-4S](2+) cluster] + N(6)-octanoyl-L-lysyl-[protein] + 2 oxidized [2Fe-2S]-[ferredoxin] + 2 S-adenosyl-L-methionine + 4 H(+) = [[Fe-S] cluster scaffold protein] + N(6)-[(R)-dihydrolipoyl]-L-lysyl-[protein] + 4 Fe(3+) + 2 hydrogen sulfide + 2 5'-deoxyadenosine + 2 L-methionine + 2 reduced [2Fe-2S]-[ferredoxin]. Its pathway is protein modification; protein lipoylation via endogenous pathway; protein N(6)-(lipoyl)lysine from octanoyl-[acyl-carrier-protein]: step 2/2. Its function is as follows. Catalyzes the radical-mediated insertion of two sulfur atoms into the C-6 and C-8 positions of the octanoyl moiety bound to the lipoyl domains of lipoate-dependent enzymes, thereby converting the octanoylated domains into lipoylated derivatives. This Pelagibacter ubique (strain HTCC1062) protein is Lipoyl synthase.